A 244-amino-acid chain; its full sequence is Ribonuclease HII (244 aa).

Residues 31 to 222 form the RNase H type-2 domain; it reads RLIAGVDEAG…VRLALQGREG (192 aa). A divalent metal cation is bound by residues Asp-37, Glu-38, and Asp-130.

Belongs to the RNase HII family. Mn(2+) is required as a cofactor. Requires Mg(2+) as cofactor.

It localises to the cytoplasm. It carries out the reaction Endonucleolytic cleavage to 5'-phosphomonoester.. Functionally, endonuclease that specifically degrades the RNA of RNA-DNA hybrids. This chain is Ribonuclease HII, found in Xanthomonas axonopodis pv. citri (strain 306).